The following is a 1180-amino-acid chain: Polyamine-transporting ATPase 13A2 (1180 aa).

The Cytoplasmic segment spans residues 1 to 44 (MSADSSPLVGSTPTGYGTLTIGTSIDPLSSSVSSVRLSGYCGSP). An intramembrane segment occupies 45–65 (WRVIGYHVVVWMMAGIPLLLF). Residues 66–235 (RWKPLWGVRL…KSYPQLLVDE (170 aa)) lie on the Cytoplasmic side of the membrane. Position 151 is a phosphoserine (Ser-151). Residues 236-253 (ALNPYYGFQAFSIALWLA) form a helical membrane-spanning segment. The Lumenal portion of the chain corresponds to 254–256 (DHY). Residues 257–276 (YWYALCIFLISSISICLSLY) form a helical membrane-spanning segment. Residues 277-427 (KTRKQSQTLR…NFKFYKHSMK (151 aa)) are Cytoplasmic-facing. A helical transmembrane segment spans residues 428 to 448 (FVAALSVLALLGTIYSIFILY). Residues 449-463 (RNRVPLNEIVIRALD) are Lumenal-facing. The chain crosses the membrane as a helical span at residues 464 to 484 (LVTVVVPPALPAAMTVCTLYA). Topologically, residues 485 to 930 (QSRLRRQGIF…REGRCSLDTS (446 aa)) are cytoplasmic. Asp-513 functions as the 4-aspartylphosphate intermediate in the catalytic mechanism. 2 residues coordinate Mg(2+): Asp-878 and Asp-882. A helical membrane pass occupies residues 931 to 951 (FSVFKYMALYSLTQFISVLIL). Residues 952–957 (YTINTN) are Lumenal-facing. The helical transmembrane segment at 958-978 (LGDLQFLAIDLVITTTVAVLM) threads the bilayer. At 979–994 (SRTGPALVLGRVRPPG) the chain is on the cytoplasmic side. Residues 995–1015 (ALLSVPVLSSLLLQMVLVTGV) traverse the membrane as a helical segment. Residues 1016 to 1048 (QLGGYFLTLAQPWFVPLNRTVAAPDNLPNYENT) lie on the Lumenal side of the membrane. Residue Asn-1033 is glycosylated (N-linked (GlcNAc...) asparagine). The helical transmembrane segment at 1049–1069 (VVFSLSSFQYLILAAAVSKGA) threads the bilayer. Residues 1070 to 1080 (PFRRPLYTNVP) are Cytoplasmic-facing. A helical membrane pass occupies residues 1081-1101 (FLVALALLSSVLVGLVLVPGL). At 1102–1117 (LQGPLALRNITDTGFK) the chain is on the lumenal side. Residue Asn-1110 is glycosylated (N-linked (GlcNAc...) asparagine). The chain crosses the membrane as a helical span at residues 1118–1138 (LLLLGLVTLNFVGAFMLESVL). Over 1139-1180 (DQCLPACLRRLRPKRASKKRFKQLERELAEQPWPPLPAGPLR) the chain is Cytoplasmic.

The protein belongs to the cation transport ATPase (P-type) (TC 3.A.3) family. Type V subfamily. Interacts with MYCBP2; the interaction inhibits the ubiquitination of TSC2 by MYCBP2. Interacts with HDAC6; the interaction results in recruitment of HDAC6 to lysosomes to promote CTTN deacetylation. Autophosphorylated. Accumulates in an inactive autophosphorylated state and autophosphorylation is stimulated by phosphatidic acid and phosphatidylinositol 3,5-bisphosphate but not by Mn(2+) or Zn(2+). The presence of spermine results in a dose-dependent reduction in autophosphorylation. Expressed in brain; protein levels are markedly increased in brain from subjects with Parkinson disease and subjects with dementia with Lewy bodies. Detected in pyramidal neurons located throughout the cingulate cortex (at protein level). In the substantia nigra, it is found in neuromelanin-positive dopaminergic neurons (at protein level).

The protein resides in the lysosome membrane. It localises to the late endosome membrane. It is found in the endosome. Its subcellular location is the multivesicular body membrane. The protein localises to the cytoplasmic vesicle. The protein resides in the autophagosome membrane. It carries out the reaction spermidine(out) + ATP + H2O = spermidine(in) + ADP + phosphate + H(+). It catalyses the reaction spermine(out) + ATP + H2O = spermine(in) + ADP + phosphate + H(+). Accumulates in an inactive autophosphorylated state. The presence of spermine results in a dose-dependent reduction in autophosphorylation. Its function is as follows. ATPase which acts as a lysosomal polyamine exporter with high affinity for spermine. Also stimulates cellular uptake of polyamines and protects against polyamine toxicity. Plays a role in intracellular cation homeostasis and the maintenance of neuronal integrity. Contributes to cellular zinc homeostasis. Confers cellular protection against Mn(2+) and Zn(2+) toxicity and mitochondrial stress. Required for proper lysosomal and mitochondrial maintenance. Regulates the autophagy-lysosome pathway through the control of SYT11 expression at both transcriptional and post-translational levels. Facilitates recruitment of deacetylase HDAC6 to lysosomes to deacetylate CTTN, leading to actin polymerization, promotion of autophagosome-lysosome fusion and completion of autophagy. Promotes secretion of exosomes as well as secretion of SCNA via exosomes. Plays a role in lipid homeostasis. The sequence is that of Polyamine-transporting ATPase 13A2 from Homo sapiens (Human).